We begin with the raw amino-acid sequence, 233 residues long: Putative N-acetylmannosamine-6-phosphate 2-epimerase (233 aa).

Belongs to the NanE family.

It catalyses the reaction an N-acyl-D-glucosamine 6-phosphate = an N-acyl-D-mannosamine 6-phosphate. It participates in amino-sugar metabolism; N-acetylneuraminate degradation; D-fructose 6-phosphate from N-acetylneuraminate: step 3/5. In terms of biological role, converts N-acetylmannosamine-6-phosphate (ManNAc-6-P) to N-acetylglucosamine-6-phosphate (GlcNAc-6-P). This Yersinia pseudotuberculosis serotype O:1b (strain IP 31758) protein is Putative N-acetylmannosamine-6-phosphate 2-epimerase.